We begin with the raw amino-acid sequence, 329 residues long: Apolipoprotein E (329 aa).

A signal peptide spans 1–18; that stretch reads MKVLWAALVVALLAGCWA. 8 repeat units span residues 92 to 113, 114 to 135, 136 to 157, 158 to 179, 180 to 201, 202 to 223, 224 to 245, and 246 to 267. The segment at 92–267 is 8 X 22 AA approximate tandem repeats; the sequence is TLMEETMKEI…HLDEVREQME (176 aa). The residue at position 155 (Met155) is a Methionine sulfoxide. Position 159 is a phosphoserine (Ser159). Positions 170 to 180 are LDL and other lipoprotein receptors binding; that stretch reads HMRKLRKRVLR. 174–177 provides a ligand contact to heparin; the sequence is LRKR. Residues 222–302 are lipid-binding and lipoprotein association; that stretch reads HAKVDALATQ…GWFEPLVEDM (81 aa). 241–248 lines the heparin pocket; sequence GQQLRGRL. The tract at residues 278-329 is homooligomerization; it reads NQMRQQAEPFQARLKGWFEPLVEDMQRQWAVLVEKVQAAVGTSPTTPPVETK. The segment at 290-302 is specificity for association with VLDL; that stretch reads RLKGWFEPLVEDM.

Belongs to the apolipoprotein A1/A4/E family. In terms of assembly, homotetramer. May interact with ABCA1; functionally associated with ABCA1 in the biogenesis of HDLs. May interact with APP/A4 amyloid-beta peptide; the interaction is extremely stable in vitro but its physiological significance is unclear. May interact with MAPT. May interact with MAP2. In the cerebrospinal fluid, interacts with secreted SORL1. Interacts with PMEL; this allows the loading of PMEL luminal fragment on ILVs to induce fibril nucleation. APOE exists as multiple glycosylated and sialylated glycoforms within cells and in plasma. The extent of glycosylation and sialylation are tissue and context specific. Post-translationally, glycated in plasma VLDL. In terms of processing, phosphorylated by FAM20C in the extracellular medium.

The protein localises to the secreted. It localises to the extracellular space. It is found in the extracellular matrix. Its subcellular location is the extracellular vesicle. The protein resides in the endosome. The protein localises to the multivesicular body. APOE is an apolipoprotein, a protein associating with lipid particles, that mainly functions in lipoprotein-mediated lipid transport between organs via the plasma and interstitial fluids. APOE is a core component of plasma lipoproteins and is involved in their production, conversion and clearance. Apolipoproteins are amphipathic molecules that interact both with lipids of the lipoprotein particle core and the aqueous environment of the plasma. As such, APOE associates with chylomicrons, chylomicron remnants, very low density lipoproteins (VLDL) and intermediate density lipoproteins (IDL) but shows a preferential binding to high-density lipoproteins (HDL). It also binds a wide range of cellular receptors including the LDL receptor/LDLR, the LDL receptor-related proteins LRP1, LRP2 and LRP8 and the very low-density lipoprotein receptor/VLDLR that mediate the cellular uptake of the APOE-containing lipoprotein particles. Finally, APOE also has a heparin-binding activity and binds heparan-sulfate proteoglycans on the surface of cells, a property that supports the capture and the receptor-mediated uptake of APOE-containing lipoproteins by cells. A main function of APOE is to mediate lipoprotein clearance through the uptake of chylomicrons, VLDLs, and HDLs by hepatocytes. APOE is also involved in the biosynthesis by the liver of VLDLs as well as their uptake by peripheral tissues ensuring the delivery of triglycerides and energy storage in muscle, heart and adipose tissues. By participating in the lipoprotein-mediated distribution of lipids among tissues, APOE plays a critical role in plasma and tissues lipid homeostasis. APOE is also involved in two steps of reverse cholesterol transport, the HDLs-mediated transport of cholesterol from peripheral tissues to the liver, and thereby plays an important role in cholesterol homeostasis. First, it is functionally associated with ABCA1 in the biogenesis of HDLs in tissues. Second, it is enriched in circulating HDLs and mediates their uptake by hepatocytes. APOE also plays an important role in lipid transport in the central nervous system, regulating neuron survival and sprouting. This Arctocephalus gazella (Antarctic fur seal) protein is Apolipoprotein E (APOE).